Consider the following 370-residue polypeptide: Cobalt-precorrin-5B C(1)-methyltransferase (370 aa).

Belongs to the CbiD family.

It catalyses the reaction Co-precorrin-5B + S-adenosyl-L-methionine = Co-precorrin-6A + S-adenosyl-L-homocysteine. It participates in cofactor biosynthesis; adenosylcobalamin biosynthesis; cob(II)yrinate a,c-diamide from sirohydrochlorin (anaerobic route): step 6/10. Its function is as follows. Catalyzes the methylation of C-1 in cobalt-precorrin-5B to form cobalt-precorrin-6A. The polypeptide is Cobalt-precorrin-5B C(1)-methyltransferase (Nostoc sp. (strain PCC 7120 / SAG 25.82 / UTEX 2576)).